The chain runs to 339 residues: Geranylgeranyl pyrophosphate synthase AN1592 (339 aa).

Residues K41, R44, and H73 each contribute to the isopentenyl diphosphate site. Mg(2+)-binding residues include D80 and D84. Dimethylallyl diphosphate is bound at residue R89. Isopentenyl diphosphate is bound at residue R90. 3 residues coordinate dimethylallyl diphosphate: K192, T193, and Q228. D231 contacts Mg(2+). 3 residues coordinate dimethylallyl diphosphate: N235, K245, and K255.

The protein belongs to the FPP/GGPP synthase family. It depends on Mg(2+) as a cofactor.

It carries out the reaction isopentenyl diphosphate + dimethylallyl diphosphate = (2E)-geranyl diphosphate + diphosphate. It catalyses the reaction isopentenyl diphosphate + (2E)-geranyl diphosphate = (2E,6E)-farnesyl diphosphate + diphosphate. The catalysed reaction is isopentenyl diphosphate + (2E,6E)-farnesyl diphosphate = (2E,6E,10E)-geranylgeranyl diphosphate + diphosphate. It functions in the pathway secondary metabolite biosynthesis. Functionally, geranylgeranyl pyrophosphate synthase; part of the gene cluster that mediates the biosynthesis of erinacines, cyathane-xylosides that show unique biological activities, including leishmanicidal activity, stimulating activity for nerve growth-factor synthesis, and agonistic activity toward the kappa opioid receptor. The geranylgeranyl diphosphate (GGPP) synthase eriE catalyzes the first step in erinacines biosynthesis via conversion of farnesyl pyrophosphate and isopentyl pyrophosphate into geranylgeranyl pyrophosphate (GGPP). GGPP is then substrate of the diterpene cyclase eriG for the production of cyatha-3,12-diene. The cytochrome P450 monooxygenase eriI then hydroxylates cyatha-3,12-diene at C-14 of the seven-membered ring to produce erinacol, which is further hydroxylated at C-15 by the cytochrome P450 monooxygenase eriC to yield cyathadiol. The cytochrome P450 monooxygenase eriA then catalyzes C-11 hydroxylation in the presence of the short chain dehydrogenase/reductase (SDR) eriH, which leads to the production of cyathatriol. The acetyltransferase eriL converts cyathatriol into 11-O-acetyl-cyathatriol. The SDR eriH catalyzes further oxidation of 11-O-acetyl-cyathatriol into 1-O-acetylcyathin A3. Finally, the glycosyl transferase eriJ tranfers xylose from UDP-xylose onto C-14 of 11-O-acetyl-cyathatriol to form eracine Q. EriJ is also able to convert 11-O-acetyl-cyathatriol to eracine Q2 by using UDP-D-glucose as cosubstrate, but at a lower rate. In the absence of eriL and eriJ, the SDR eriH is able to convert cyathatriol to cyathin A3; this is likely a switching mechanism in the biosynthesis of cyathins (C-14 ketogroup)and erinacines (C-14 glycosylated group). The roles of the SDR eriB, the polyprenyl transferase eriF and the dehydrogenase eriK have still to be identified. This Hericium erinaceus (Lion's mane mushroom) protein is Geranylgeranyl pyrophosphate synthase AN1592.